The chain runs to 159 residues: Probable deoxyuridine 5'-triphosphate nucleotidohydrolase (159 aa).

Belongs to the dCTP deaminase family. Archaeal dUTPase subfamily.

The catalysed reaction is dUTP + H2O = dUMP + diphosphate + H(+). It functions in the pathway pyrimidine metabolism; dUMP biosynthesis; dUMP from dCTP (dUTP route): step 2/2. In terms of biological role, this enzyme is involved in nucleotide metabolism: it produces dUMP, the immediate precursor of thymidine nucleotides and it decreases the intracellular concentration of dUTP so that uracil cannot be incorporated into DNA. This chain is Probable deoxyuridine 5'-triphosphate nucleotidohydrolase, found in Aeropyrum pernix (strain ATCC 700893 / DSM 11879 / JCM 9820 / NBRC 100138 / K1).